Consider the following 465-residue polypeptide: Ribulose bisphosphate carboxylase large chain (465 aa).

The residue at position 4 (Lys4) is an N6,N6,N6-trimethyllysine. Substrate-binding residues include Asn113 and Thr163. Lys165 acts as the Proton acceptor in catalysis. Lys167 serves as a coordination point for substrate. Residues Lys191, Asp193, and Glu194 each contribute to the Mg(2+) site. Lys191 is modified (N6-carboxylysine). The active-site Proton acceptor is His284. The substrate site is built by Arg285, His317, and Ser369.

This sequence belongs to the RuBisCO large chain family. Type I subfamily. Heterohexadecamer of 8 large chains and 8 small chains; disulfide-linked. The disulfide link is formed within the large subunit homodimers. Mg(2+) serves as cofactor. Post-translationally, the disulfide bond which can form in the large chain dimeric partners within the hexadecamer appears to be associated with oxidative stress and protein turnover.

Its subcellular location is the plastid. The protein resides in the chloroplast. The enzyme catalyses 2 (2R)-3-phosphoglycerate + 2 H(+) = D-ribulose 1,5-bisphosphate + CO2 + H2O. It catalyses the reaction D-ribulose 1,5-bisphosphate + O2 = 2-phosphoglycolate + (2R)-3-phosphoglycerate + 2 H(+). RuBisCO catalyzes two reactions: the carboxylation of D-ribulose 1,5-bisphosphate, the primary event in carbon dioxide fixation, as well as the oxidative fragmentation of the pentose substrate in the photorespiration process. Both reactions occur simultaneously and in competition at the same active site. The polypeptide is Ribulose bisphosphate carboxylase large chain (Clitoria ternatea (Butterfly pea)).